The chain runs to 423 residues: Protein phosphatase 2C 77 (423 aa).

The segment at 74 to 95 is disordered; that stretch reads GDEINGSDEFDPRSMNQSEKKV. Residues 112–411 form the PPM-type phosphatase domain; it reads LYGVTSICGR…DNISVVVVDL (300 aa). 3 residues coordinate Mg(2+): D165, D251, and S252. Residues C257 and C331 are joined by a disulfide bond. Mg(2+) is bound by residues D337 and D402.

Belongs to the PP2C family. As to quaternary structure, interacts with SPK1, CIPK15/PKS3, GPX3, SCAR1, SCAR2, SCAR3 and SCARL. Also interacts with CIPK24/SOS2. Binds to the fibrillin precursor protein. Interacts with ABA-bounded PYR1, PYL1, PYL2, PYL3, PYL4, PYL5, PYL6, PYL8 and PYL9, and with free PYL2, PYL3 and PYL4. Interacts with and represses GHR1, and, to a lesser extent, SRK2E/OST1. The cofactor is Mg(2+). Requires Mn(2+) as cofactor.

It catalyses the reaction O-phospho-L-seryl-[protein] + H2O = L-seryl-[protein] + phosphate. The enzyme catalyses O-phospho-L-threonyl-[protein] + H2O = L-threonyl-[protein] + phosphate. Its activity is regulated as follows. Phosphatase activity repressed by oxidized ATGPX3, free fatty acids (e.g. arachidonic acid (20:4) and Linolenic acid (18:3)) and by H(2)O(2). Repressed by PYR/PYL/RCAR ABA receptors in an ABA-dependent manner. In terms of biological role, repressor of the abscisic acid (ABA) signaling pathway that regulates numerous ABA responses, such as stomatal closure, osmotic water permeability of the plasma membrane (Pos), high light stress, response to glucose, seed germination and inhibition of vegetative growth. During the stomatal closure regulation, modulates the inward calcium-channel permeability as well as H(2)O(2) and oxidative burst in response to ABA and dehydration. Represses GHR1 and, to some extent, SRK2E/OST1, kinases involved in the regulation of SLAC1-dependent stomatal closure. Controls negatively fibrillin that is involved in mediating ABA-induced photoprotection. May be implicated in ABA content regulation. Involved in acquired thermotolerance of root growth and seedling survival. Required for the Erwinia amylovora harpin-induced (HrpN) drought tolerance. Involved in the hydrotropic response. The chain is Protein phosphatase 2C 77 from Arabidopsis thaliana (Mouse-ear cress).